We begin with the raw amino-acid sequence, 127 residues long: Small ribosomal subunit protein uS12 (127 aa).

The residue at position 89 (D89) is a 3-methylthioaspartic acid.

The protein belongs to the universal ribosomal protein uS12 family. As to quaternary structure, part of the 30S ribosomal subunit. Contacts proteins S8 and S17. May interact with IF1 in the 30S initiation complex.

Functionally, with S4 and S5 plays an important role in translational accuracy. In terms of biological role, interacts with and stabilizes bases of the 16S rRNA that are involved in tRNA selection in the A site and with the mRNA backbone. Located at the interface of the 30S and 50S subunits, it traverses the body of the 30S subunit contacting proteins on the other side and probably holding the rRNA structure together. The combined cluster of proteins S8, S12 and S17 appears to hold together the shoulder and platform of the 30S subunit. In Aliarcobacter butzleri (strain RM4018) (Arcobacter butzleri), this protein is Small ribosomal subunit protein uS12.